The following is a 189-amino-acid chain: HGPRTase-like protein 2 (189 aa).

This sequence belongs to the purine/pyrimidine phosphoribosyltransferase family. Archaeal HPRT subfamily.

May catalyze a purine salvage reaction, the substrate is unknown. This chain is HGPRTase-like protein 2, found in Halalkalicoccus jeotgali (strain DSM 18796 / CECT 7217 / JCM 14584 / KCTC 4019 / B3).